Here is an 89-residue protein sequence, read N- to C-terminus: MAHKKGVGSSRNGRDSESKRLGVKEGDGKFVSAGSILVRQRGTKIYPGDNVGRGGDDTLFAKVDGIVKFERKGRDKKQVSIVVPEVVAQ.

The disordered stretch occupies residues 1-26 (MAHKKGVGSSRNGRDSESKRLGVKEG). Basic and acidic residues predominate over residues 12-26 (NGRDSESKRLGVKEG).

It belongs to the bacterial ribosomal protein bL27 family.

This chain is Large ribosomal subunit protein bL27, found in Desulforamulus reducens (strain ATCC BAA-1160 / DSM 100696 / MI-1) (Desulfotomaculum reducens).